The following is a 775-amino-acid chain: Beta-galactosidase 7 (775 aa).

Residues 1 to 17 form the signal peptide; that stretch reads MRGGMAITAALVVVAAA. The active-site Proton donor is Glu-185. Catalysis depends on Glu-256, which acts as the Nucleophile. N-linked (GlcNAc...) asparagine glycosylation is found at Asn-257, Asn-266, Asn-277, Asn-358, and Asn-602. Residues 689–775 enclose the SUEL-type lectin domain; the sequence is RGKVPKVRIW…KSLLVVADCR (87 aa).

This sequence belongs to the glycosyl hydrolase 35 family.

It localises to the secreted. The protein localises to the extracellular space. It is found in the apoplast. The enzyme catalyses Hydrolysis of terminal non-reducing beta-D-galactose residues in beta-D-galactosides.. The sequence is that of Beta-galactosidase 7 from Oryza sativa subsp. japonica (Rice).